A 528-amino-acid chain; its full sequence is Peptide chain release factor 3 (528 aa).

The tr-type G domain occupies Asp10–His278. GTP-binding positions include Ser19–Thr26, Asp87–His91, and Asn141–Asp144.

Belongs to the TRAFAC class translation factor GTPase superfamily. Classic translation factor GTPase family. PrfC subfamily.

It localises to the cytoplasm. In terms of biological role, increases the formation of ribosomal termination complexes and stimulates activities of RF-1 and RF-2. It binds guanine nucleotides and has strong preference for UGA stop codons. It may interact directly with the ribosome. The stimulation of RF-1 and RF-2 is significantly reduced by GTP and GDP, but not by GMP. In Syntrophobacter fumaroxidans (strain DSM 10017 / MPOB), this protein is Peptide chain release factor 3.